Consider the following 879-residue polypeptide: uncharacterized protein (879 aa).

A helical membrane pass occupies residues 14-34 (LAFFGCGVSVGAFFTLFLMGT).

It is found in the membrane. This is an uncharacterized protein from Mycoplasma pneumoniae (strain ATCC 29342 / M129 / Subtype 1) (Mycoplasmoides pneumoniae).